Consider the following 241-residue polypeptide: Uracil-DNA glycosylase (241 aa).

Aspartate 73 (proton acceptor) is an active-site residue.

The protein belongs to the uracil-DNA glycosylase (UDG) superfamily. UNG family.

It is found in the cytoplasm. It catalyses the reaction Hydrolyzes single-stranded DNA or mismatched double-stranded DNA and polynucleotides, releasing free uracil.. Excises uracil residues from the DNA which can arise as a result of misincorporation of dUMP residues by DNA polymerase or due to deamination of cytosine. The chain is Uracil-DNA glycosylase from Agrobacterium fabrum (strain C58 / ATCC 33970) (Agrobacterium tumefaciens (strain C58)).